Consider the following 279-residue polypeptide: S-formylglutathione hydrolase (279 aa).

Active-site charge relay system residues include Ser-150, Asp-226, and His-258.

It belongs to the esterase D family.

It carries out the reaction S-formylglutathione + H2O = formate + glutathione + H(+). In terms of biological role, serine hydrolase involved in the detoxification of formaldehyde. Hydrolyzes S-formylglutathione to glutathione and formate. This chain is S-formylglutathione hydrolase (fghA), found in Paracoccus denitrificans (strain Pd 1222).